A 386-amino-acid chain; its full sequence is WD repeat-containing protein 89 (386 aa).

WD repeat units follow at residues 21-65 (KEPT…VIRE), 68-106 (GYPGLNGVKFANSHDSVYSSCTDGTVKCWDARLASGKPV), 111-155 (GYPS…QDLS), 167-207 (THSD…EDDA), 213-253 (NSVS…TDEP), and 318-357 (GHAATVRSFCWNMQDDSLLTGGEDAQLLLWKPGAVEKTFT).

The protein is WD repeat-containing protein 89 (WDR89) of Bos taurus (Bovine).